Here is a 357-residue protein sequence, read N- to C-terminus: Biotin synthase (357 aa).

In terms of domain architecture, Radical SAM core spans 41–268; the sequence is NEVQISRLLS…KSRVRLSAGR (228 aa). Residues Cys56, Cys60, and Cys63 each contribute to the [4Fe-4S] cluster site. Residues Cys100, Cys131, Cys191, and Arg263 each coordinate [2Fe-2S] cluster.

It belongs to the radical SAM superfamily. Biotin synthase family. In terms of assembly, homodimer. Requires [4Fe-4S] cluster as cofactor. It depends on [2Fe-2S] cluster as a cofactor.

The enzyme catalyses (4R,5S)-dethiobiotin + (sulfur carrier)-SH + 2 reduced [2Fe-2S]-[ferredoxin] + 2 S-adenosyl-L-methionine = (sulfur carrier)-H + biotin + 2 5'-deoxyadenosine + 2 L-methionine + 2 oxidized [2Fe-2S]-[ferredoxin]. It functions in the pathway cofactor biosynthesis; biotin biosynthesis; biotin from 7,8-diaminononanoate: step 2/2. Functionally, catalyzes the conversion of dethiobiotin (DTB) to biotin by the insertion of a sulfur atom into dethiobiotin via a radical-based mechanism. This Shewanella denitrificans (strain OS217 / ATCC BAA-1090 / DSM 15013) protein is Biotin synthase.